Reading from the N-terminus, the 325-residue chain is Tagatose 1,6-diphosphate aldolase 1 (325 aa).

Belongs to the aldolase LacD family.

The catalysed reaction is D-tagatofuranose 1,6-bisphosphate = D-glyceraldehyde 3-phosphate + dihydroxyacetone phosphate. Its pathway is carbohydrate metabolism; D-tagatose 6-phosphate degradation; D-glyceraldehyde 3-phosphate and glycerone phosphate from D-tagatose 6-phosphate: step 2/2. The chain is Tagatose 1,6-diphosphate aldolase 1 from Streptococcus agalactiae serotype III (strain NEM316).